We begin with the raw amino-acid sequence, 588 residues long: ATP-dependent lipid A-core flippase (588 aa).

Transmembrane regions (helical) follow at residues 23-43 (FWPV…IDAG), 56-76 (FITI…IGIT), 141-161 (DALT…TVMM), 162-182 (VICW…GIIV), 257-277 (LVIA…STVI), and 278-298 (TISA…IKPM). The 283-residue stretch at 28–310 (LLGVLANILY…LTTLNATIQR (283 aa)) folds into the ABC transmembrane type-1 domain. Positions 342 to 576 (IEFKHVYHAY…DGHYAQLYKV (235 aa)) constitute an ABC transporter domain. An ATP-binding site is contributed by 375-382 (GHSGSGKT).

The protein belongs to the ABC transporter superfamily. Lipid exporter (TC 3.A.1.106) family. In terms of assembly, homodimer.

It is found in the cell inner membrane. The catalysed reaction is ATP + H2O + lipid A-core oligosaccharideSide 1 = ADP + phosphate + lipid A-core oligosaccharideSide 2.. Its function is as follows. Involved in lipopolysaccharide (LPS) biosynthesis. Translocates lipid A-core from the inner to the outer leaflet of the inner membrane. Transmembrane domains (TMD) form a pore in the inner membrane and the ATP-binding domain (NBD) is responsible for energy generation. This Legionella pneumophila (strain Paris) protein is ATP-dependent lipid A-core flippase.